The primary structure comprises 230 residues: Ribosomal RNA small subunit methyltransferase G (230 aa).

S-adenosyl-L-methionine is bound by residues Gly-91, Leu-96, Val-142–Glu-143, and Arg-161.

This sequence belongs to the methyltransferase superfamily. RNA methyltransferase RsmG family.

Its subcellular location is the cytoplasm. It carries out the reaction guanosine(527) in 16S rRNA + S-adenosyl-L-methionine = N(7)-methylguanosine(527) in 16S rRNA + S-adenosyl-L-homocysteine. Functionally, specifically methylates the N7 position of guanine in position 527 of 16S rRNA. This chain is Ribosomal RNA small subunit methyltransferase G, found in Burkholderia pseudomallei (strain K96243).